A 206-amino-acid chain; its full sequence is Ribosome maturation factor RimP (206 aa).

The interval 164 to 206 is disordered; sequence GGIPEGRAVPSDAVDLTDDSGVDSVEDDEAELEDVENEEGFDK. Acidic residues predominate over residues 178–206; sequence DLTDDSGVDSVEDDEAELEDVENEEGFDK.

This sequence belongs to the RimP family.

It localises to the cytoplasm. Required for maturation of 30S ribosomal subunits. The protein is Ribosome maturation factor RimP of Rhodococcus erythropolis (strain PR4 / NBRC 100887).